A 506-amino-acid chain; its full sequence is Aldehyde dehydrogenase (506 aa).

240–245 (GSTEIG) is an NAD(+) binding site. Residues Glu-262 and Cys-301 contribute to the active site.

This sequence belongs to the aldehyde dehydrogenase family.

It catalyses the reaction an aldehyde + NAD(+) + H2O = a carboxylate + NADH + 2 H(+). It participates in alcohol metabolism; ethanol degradation; acetate from ethanol: step 2/2. Its function is as follows. May be involved in V.cholerae virulence, as its expression is under the control of ToxR, a transcriptional activator of several genes associated with virulence. This Vibrio cholerae serotype O1 (strain ATCC 39541 / Classical Ogawa 395 / O395) protein is Aldehyde dehydrogenase (aldA).